A 35-amino-acid chain; its full sequence is Putative gastric cancer-related gene 224 protein (35 aa).

In terms of tissue distribution, expressed in gastric mucosa.

In Homo sapiens (Human), this protein is Putative gastric cancer-related gene 224 protein (GCRG224).